A 343-amino-acid polypeptide reads, in one-letter code: Phosphate acyltransferase (343 aa).

Belongs to the PlsX family. Homodimer. Probably interacts with PlsY.

It is found in the cytoplasm. The catalysed reaction is a fatty acyl-[ACP] + phosphate = an acyl phosphate + holo-[ACP]. It participates in lipid metabolism; phospholipid metabolism. Functionally, catalyzes the reversible formation of acyl-phosphate (acyl-PO(4)) from acyl-[acyl-carrier-protein] (acyl-ACP). This enzyme utilizes acyl-ACP as fatty acyl donor, but not acyl-CoA. This is Phosphate acyltransferase from Limosilactobacillus reuteri (strain DSM 20016) (Lactobacillus reuteri).